Reading from the N-terminus, the 393-residue chain is MKAELIAVGTEILTGQIINTNAQFLSEKCAELGIDVYFHTAVGDNEGRLLSTLEVASKRSNMVVLCGGLGPTEDDLTKQTLATFLGRNLVFDELAMAKLDRFFASRPGRVRTPNNERQAQIVEGSQALQNPAGLAVGGMIEQDGVTYIVLPGPPSELKAMFSESLLPLLSQSQQQLYSRVLRFFGIGESQLVTVLADVIDKQTDPTLAPYAKVGEVTLRLSTKATSQEEANLRLNQLEEDILQHDKLADYFYAYGEDNSLVKTVATRLAEKRQTIAIVEQGTGGLLQAELSLALADQPYFSGGKVVGQLGIESGWLSEEADCIRQELQADLGLAVSVLIKPESTEDNVLAKVYLTLATPSGISQKEIDLGGYSWQYLRQLACLQAWDFVRNTL.

This sequence belongs to the CinA family.

The protein is Putative competence-damage inducible protein of Streptococcus suis (strain 98HAH33).